Consider the following 195-residue polypeptide: GTP cyclohydrolase-2 (195 aa).

48 to 52 (RIHSE) contributes to the GTP binding site. Zn(2+) is bound by residues cysteine 53, cysteine 64, and cysteine 66. Residues glutamine 69, 90-92 (EGR), and threonine 112 each bind GTP. Aspartate 124 functions as the Proton acceptor in the catalytic mechanism. Arginine 126 (nucleophile) is an active-site residue. 2 residues coordinate GTP: threonine 147 and lysine 152.

This sequence belongs to the GTP cyclohydrolase II family. It depends on Zn(2+) as a cofactor.

The catalysed reaction is GTP + 4 H2O = 2,5-diamino-6-hydroxy-4-(5-phosphoribosylamino)-pyrimidine + formate + 2 phosphate + 3 H(+). It functions in the pathway cofactor biosynthesis; riboflavin biosynthesis; 5-amino-6-(D-ribitylamino)uracil from GTP: step 1/4. In terms of biological role, catalyzes the conversion of GTP to 2,5-diamino-6-ribosylamino-4(3H)-pyrimidinone 5'-phosphate (DARP), formate and pyrophosphate. The sequence is that of GTP cyclohydrolase-2 from Campylobacter fetus subsp. fetus (strain 82-40).